A 526-amino-acid chain; its full sequence is Peptide chain release factor 3 (526 aa).

The tr-type G domain maps to 11–277 (SKRRTFAIIS…SLIKWAPSPL (267 aa)). Residues 20-27 (SHPDAGKT), 88-92 (DTPGH), and 142-145 (NKLD) each bind GTP.

It belongs to the TRAFAC class translation factor GTPase superfamily. Classic translation factor GTPase family. PrfC subfamily.

Its subcellular location is the cytoplasm. In terms of biological role, increases the formation of ribosomal termination complexes and stimulates activities of RF-1 and RF-2. It binds guanine nucleotides and has strong preference for UGA stop codons. It may interact directly with the ribosome. The stimulation of RF-1 and RF-2 is significantly reduced by GTP and GDP, but not by GMP. The protein is Peptide chain release factor 3 of Buchnera aphidicola subsp. Acyrthosiphon pisum (strain 5A).